A 51-amino-acid polypeptide reads, in one-letter code: uncharacterized protein (51 aa).

In terms of biological role, this protein is non-essential for virus function. This is an uncharacterized protein from Sulfolobus spindle-shape virus 1 (SSV1).